A 28-amino-acid chain; its full sequence is Peptide 2 (28 aa).

The protein belongs to the short scorpion toxin superfamily. Potassium channel inhibitor family. Alpha-KTx 09 subfamily. In terms of tissue distribution, expressed by the venom gland.

The protein resides in the secreted. In terms of biological role, blocks potassium channels. The chain is Peptide 2 from Hottentotta tamulus sindicus (Scorpion).